The sequence spans 282 residues: Undecaprenyl-diphosphatase (282 aa).

The next 5 membrane-spanning stretches (helical) occupy residues 96-116 (WMVIVGTLPVSIVGLLAKDII), 123-143 (MWITASVLIAFSFVFIAAEKW), 198-218 (FLLAIPAVLASGLFSLPDAFA), 229-249 (QLAVGTGIAFALGYASIAWLL), and 260-280 (FAAYRIPVGLLVMALLATGML).

The protein belongs to the UppP family.

The protein resides in the cell membrane. The catalysed reaction is di-trans,octa-cis-undecaprenyl diphosphate + H2O = di-trans,octa-cis-undecaprenyl phosphate + phosphate + H(+). Its function is as follows. Catalyzes the dephosphorylation of undecaprenyl diphosphate (UPP). Confers resistance to bacitracin. This is Undecaprenyl-diphosphatase from Corynebacterium diphtheriae (strain ATCC 700971 / NCTC 13129 / Biotype gravis).